The following is a 379-amino-acid chain: UDP-N-acetylglucosamine--N-acetylmuramyl-(pentapeptide) pyrophosphoryl-undecaprenol N-acetylglucosamine transferase (379 aa).

Residues 10-12 (TGG), Asn124, and Arg165 each bind UDP-N-acetyl-alpha-D-glucosamine. The segment at 174–195 (TRDQGPGIRDQEKHMTDSTGPA) is disordered. UDP-N-acetyl-alpha-D-glucosamine contacts are provided by Ser211, Ile266, and Gln311.

The protein belongs to the glycosyltransferase 28 family. MurG subfamily.

Its subcellular location is the cell inner membrane. The enzyme catalyses di-trans,octa-cis-undecaprenyl diphospho-N-acetyl-alpha-D-muramoyl-L-alanyl-D-glutamyl-meso-2,6-diaminopimeloyl-D-alanyl-D-alanine + UDP-N-acetyl-alpha-D-glucosamine = di-trans,octa-cis-undecaprenyl diphospho-[N-acetyl-alpha-D-glucosaminyl-(1-&gt;4)]-N-acetyl-alpha-D-muramoyl-L-alanyl-D-glutamyl-meso-2,6-diaminopimeloyl-D-alanyl-D-alanine + UDP + H(+). Its pathway is cell wall biogenesis; peptidoglycan biosynthesis. Functionally, cell wall formation. Catalyzes the transfer of a GlcNAc subunit on undecaprenyl-pyrophosphoryl-MurNAc-pentapeptide (lipid intermediate I) to form undecaprenyl-pyrophosphoryl-MurNAc-(pentapeptide)GlcNAc (lipid intermediate II). The polypeptide is UDP-N-acetylglucosamine--N-acetylmuramyl-(pentapeptide) pyrophosphoryl-undecaprenol N-acetylglucosamine transferase (Pelobacter propionicus (strain DSM 2379 / NBRC 103807 / OttBd1)).